We begin with the raw amino-acid sequence, 764 residues long: Molybdenum cofactor sulfurase 3 (764 aa).

Lys228 carries the post-translational modification N6-(pyridoxal phosphate)lysine. The active site involves Cys394. Positions 607-762 (LRLLKQSDEE…LYCNSVVEGL (156 aa)) constitute an MOSC domain.

Belongs to the class-V pyridoxal-phosphate-dependent aminotransferase family. MOCOS subfamily. The cofactor is pyridoxal 5'-phosphate.

It catalyses the reaction Mo-molybdopterin + L-cysteine + AH2 = thio-Mo-molybdopterin + L-alanine + A + H2O. Its function is as follows. Sulfurates the molybdenum cofactor. Sulfation of molybdenum is essential for xanthine dehydrogenase (XDH) and aldehyde oxidase (ADO) enzymes in which molybdenum cofactor is liganded by 1 oxygen and 1 sulfur atom in active form. In Aedes aegypti (Yellowfever mosquito), this protein is Molybdenum cofactor sulfurase 3.